The chain runs to 354 residues: Glycerol-3-phosphate dehydrogenase [NAD(+)], glycosomal (354 aa).

NAD(+)-binding positions include 15–20 (GSGAFG), Phe-90, Lys-118, and Ala-150. Lys-118 is a binding site for substrate. Lys-203 functions as the Proton acceptor in the catalytic mechanism. Residues Arg-267 and Glu-293 each coordinate NAD(+). Substrate is bound at residue 267–268 (RN). Residues 352–354 (SKM) carry the Microbody targeting signal motif.

This sequence belongs to the NAD-dependent glycerol-3-phosphate dehydrogenase family.

It localises to the glycosome. The catalysed reaction is sn-glycerol 3-phosphate + NAD(+) = dihydroxyacetone phosphate + NADH + H(+). In Trypanosoma brucei brucei, this protein is Glycerol-3-phosphate dehydrogenase [NAD(+)], glycosomal (GPD).